The following is a 325-amino-acid chain: tRNA(Ile)-lysidine synthase (325 aa).

ATP is bound at residue 35-40 (SGGQDS).

The protein belongs to the tRNA(Ile)-lysidine synthase family.

It is found in the cytoplasm. The enzyme catalyses cytidine(34) in tRNA(Ile2) + L-lysine + ATP = lysidine(34) in tRNA(Ile2) + AMP + diphosphate + H(+). Functionally, ligates lysine onto the cytidine present at position 34 of the AUA codon-specific tRNA(Ile) that contains the anticodon CAU, in an ATP-dependent manner. Cytidine is converted to lysidine, thus changing the amino acid specificity of the tRNA from methionine to isoleucine. The chain is tRNA(Ile)-lysidine synthase from Gloeobacter violaceus (strain ATCC 29082 / PCC 7421).